A 450-amino-acid polypeptide reads, in one-letter code: MREIVHVQVGRCGNQIGSKFWEVISDEHGIDPCGRYHGDSDLQLERINVYYNEAFGAKYVPRAVLVDLEPSTMDSIRGGPYGSLYRPDNVVCGASGAGNNWAKGHYTEGADLLETVLDVVRKEAEGCDCLQGFQLVHSLGGGTGSGMGTLLLANLTDEYPDRITATYSVVPSPTVSETVVEPYNATLSVNQLIENSIQSYCIDNEALYYICHRTLKLMAPTYGALNHLVSLTMSGVTTCLRFPGQLNADLRKLAVNMIPFPRLHFFMPGFAPLTSRGSQQYRALTVPELTQQMFDAKNMMAACDPHRGRYLTVATVFRGRMSMKEIDEQILNVQKKNKDFFVEWIPNNVQTAVCDIPPRGMKMSATFIGNTTAIQEIFKRISEQFAAMFSRKAFLHWYTGEGMEEGDFAEADNNVSDLLSEYQQYQDATIDQEFEDEEEVEEQNDDSDEQ.

GTP contacts are provided by E69, S138, G142, T143, G144, N204, and N226. E69 lines the Mg(2+) pocket. The segment at D427–Q450 is disordered. Residues I430–Q450 are compositionally biased toward acidic residues.

Belongs to the tubulin family. Dimer of alpha and beta chains. A typical microtubule is a hollow water-filled tube with an outer diameter of 25 nm and an inner diameter of 15 nM. Alpha-beta heterodimers associate head-to-tail to form protofilaments running lengthwise along the microtubule wall with the beta-tubulin subunit facing the microtubule plus end conferring a structural polarity. Microtubules usually have 13 protofilaments but different protofilament numbers can be found in some organisms and specialized cells. It depends on Mg(2+) as a cofactor.

It is found in the cytoplasm. It localises to the cytoskeleton. In terms of biological role, tubulin is the major constituent of microtubules, a cylinder consisting of laterally associated linear protofilaments composed of alpha- and beta-tubulin heterodimers. Microtubules grow by the addition of GTP-tubulin dimers to the microtubule end, where a stabilizing cap forms. Below the cap, tubulin dimers are in GDP-bound state, owing to GTPase activity of alpha-tubulin. This Bombyx mori (Silk moth) protein is Tubulin beta chain.